A 246-amino-acid polypeptide reads, in one-letter code: Probable chemoreceptor glutamine deamidase CheD (246 aa).

The tract at residues 225–246 is disordered; that stretch reads GAGVQPAVQKAASPYAANLSRK.

The protein belongs to the CheD family.

It catalyses the reaction L-glutaminyl-[protein] + H2O = L-glutamyl-[protein] + NH4(+). Functionally, probably deamidates glutamine residues to glutamate on methyl-accepting chemotaxis receptors (MCPs), playing an important role in chemotaxis. This chain is Probable chemoreceptor glutamine deamidase CheD, found in Burkholderia vietnamiensis (strain G4 / LMG 22486) (Burkholderia cepacia (strain R1808)).